A 341-amino-acid chain; its full sequence is MRRNSERPVRITEVCLRDGSHVMKHQFTEEQVRFVTRALDEAGMHYIEVSHGDGLGGSTLQYGKSLVNEMKLIEAAVDECKQAQIAVLLIPGIGTIHELKQAANIGAKLVRVATHVTEADVSAQHIQFARELGMEVCGFLMMAHSASVEKLVEQAKLMESYGAEAVYVTDSAGALLPHEVRERIRALRQSLNIEIGFHGHNNLSVAVANTITAIEEGATRIDGSVRCLGAGAGNAQTEVLLAVLDRMGYKLDIDLYKMMDVAEEVVAPLLPVPQEIQKGSLVMGYAGVYSSFLLHAERAAQRFNVDARDILIELGKRKVVGGQEDMILDVAAELAKIKMEV.

Residues Val-9–Met-259 enclose the Pyruvate carboxyltransferase domain. Arg-17–Asp-18 provides a ligand contact to substrate. Position 18 (Asp-18) interacts with Mn(2+). His-21 acts as the Proton acceptor in catalysis. Positions 171 and 198 each coordinate substrate. Mn(2+) contacts are provided by His-198 and His-200. Tyr-289 contacts substrate.

The protein belongs to the 4-hydroxy-2-oxovalerate aldolase family.

The enzyme catalyses (S)-4-hydroxy-2-oxopentanoate = acetaldehyde + pyruvate. In Bacillus thuringiensis (strain Al Hakam), this protein is 4-hydroxy-2-oxovalerate aldolase.